The primary structure comprises 108 residues: ADM5 (108 aa).

Residues 1–18 (MTAHILLLWLFASSILGD) form the signal peptide. The propeptide occupies 19 to 25 (PDSAGRL). C38 and C43 form a disulfide bridge. Positions 61 to 108 (KELSGKAGRKPQDPYSYGRRRRRRRRRREARLLRRLQDPSLRRAQLAG) are disordered. Y77 carries the tyrosine amide modification. Positions 78–89 (GRRRRRRRRRRE) are enriched in basic residues. A propeptide spanning residues 89-108 (EARLLRRLQDPSLRRAQLAG) is cleaved from the precursor. Over residues 90–101 (ARLLRRLQDPSL) the composition is skewed to basic and acidic residues.

Belongs to the adrenomedullin family. As to expression, expressed abundantly in the spleen and thymus. Also expressed in adrenal and pituitary. Not expressed in brain, heart, kidney, liver and stomach.

Its subcellular location is the secreted. Seems to have a peripheral vasodepressor effect and a central vasopressor effect. This chain is ADM5 (ADM5), found in Sus scrofa (Pig).